Here is a 281-residue protein sequence, read N- to C-terminus: INSIG family protein (281 aa).

Residues 1-93 (MSRKEIYEPR…FIDYSSLITF (93 aa)) are Cytoplasmic-facing. A Phosphoserine modification is found at Ser-28. A helical transmembrane segment spans residues 94–120 (FCKLCVIFGLGFVFTYLAEQIVQDAKL). Over 121–134 (PLLTVNLKSWKFEP) the chain is Lumenal. The chain crosses the membrane as a helical span at residues 135-159 (PWPAIFGFVAVILGLSYRRMDTKYP). Topologically, residues 160-170 (LGAAPLRPSQS) are cytoplasmic. The chain crosses the membrane as a helical span at residues 171 to 186 (SKWQWISRYLAAFATL). Over 187 to 189 (LLS) the chain is Lumenal. Residues 190–215 (MKKLLFISNSHSIVALVASSASIWYI) traverse the membrane as a helical segment. The Cytoplasmic portion of the chain corresponds to 216–221 (FDRSRN). Residues 222–256 (GIILSTITSVLGSILYYNLVDTSKIELNGVEFPEI) traverse the membrane as a helical segment. Residues 257 to 260 (QFRL) lie on the Lumenal side of the membrane. Residues 261–281 (WIPMILFSASTIVGNAGRLLF) form a helical membrane-spanning segment.

This sequence belongs to the INSIG family.

It is found in the endoplasmic reticulum membrane. This is INSIG family protein (ins1) from Schizosaccharomyces pombe (strain 972 / ATCC 24843) (Fission yeast).